A 231-amino-acid polypeptide reads, in one-letter code: MKKVSRNLLQARQMVDKNRFYSLEEAMELVKKTSYTKFSGSVDLAIRLNLDTRKADQQLRGAVVLPHGTGKSVRVLVATDSSEVAAKSLEAGADLIYSTAELEQNLKIDNFNFDVIVVEPKLMPILGRYGKKLGPKGLMPNPKTGTVSPNPEKAVAEIKKGKANYRADRYGIIHSLIGKTNMEVPQLVENANTLLRLIKRLKPNTVKGNYFKNLTVSASMGPSIKIRFDNL.

The protein belongs to the universal ribosomal protein uL1 family. As to quaternary structure, part of the 50S ribosomal subunit.

Binds directly to 23S rRNA. The L1 stalk is quite mobile in the ribosome, and is involved in E site tRNA release. Its function is as follows. Protein L1 is also a translational repressor protein, it controls the translation of the L11 operon by binding to its mRNA. The protein is Large ribosomal subunit protein uL1 of Mesomycoplasma hyopneumoniae (strain 232) (Mycoplasma hyopneumoniae).